A 201-amino-acid chain; its full sequence is LexA repressor (201 aa).

The segment at residues 28–48 (LREIAAQLGISGTLGVMKHLE) is a DNA-binding region (H-T-H motif). Catalysis depends on for autocatalytic cleavage activity residues Ser-120 and Lys-157.

The protein belongs to the peptidase S24 family. Homodimer.

The enzyme catalyses Hydrolysis of Ala-|-Gly bond in repressor LexA.. Functionally, represses a number of genes involved in the response to DNA damage (SOS response), including recA and lexA. In the presence of single-stranded DNA, RecA interacts with LexA causing an autocatalytic cleavage which disrupts the DNA-binding part of LexA, leading to derepression of the SOS regulon and eventually DNA repair. This chain is LexA repressor, found in Citrifermentans bemidjiense (strain ATCC BAA-1014 / DSM 16622 / JCM 12645 / Bem) (Geobacter bemidjiensis).